The primary structure comprises 207 residues: Large ribosomal subunit protein uL4 (207 aa).

The tract at residues 45–78 (RQGTHAVKNRSAVSGGGRKPWRQKGTGRARQGSI) is disordered.

This sequence belongs to the universal ribosomal protein uL4 family. In terms of assembly, part of the 50S ribosomal subunit.

Its function is as follows. One of the primary rRNA binding proteins, this protein initially binds near the 5'-end of the 23S rRNA. It is important during the early stages of 50S assembly. It makes multiple contacts with different domains of the 23S rRNA in the assembled 50S subunit and ribosome. Forms part of the polypeptide exit tunnel. The protein is Large ribosomal subunit protein uL4 of Lacticaseibacillus paracasei (strain ATCC 334 / BCRC 17002 / CCUG 31169 / CIP 107868 / KCTC 3260 / NRRL B-441) (Lactobacillus paracasei).